A 239-amino-acid chain; its full sequence is LexA repressor (239 aa).

The segment at residues 26-46 (FDEMKEALDLASKSGIHRLIT) is a DNA-binding region (H-T-H motif). The disordered stretch occupies residues 90–110 (GSLGKTPPPPARPAPVATNDD). Catalysis depends on for autocatalytic cleavage activity residues Ser160 and Lys198.

Belongs to the peptidase S24 family. Homodimer.

It catalyses the reaction Hydrolysis of Ala-|-Gly bond in repressor LexA.. In terms of biological role, represses a number of genes involved in the response to DNA damage (SOS response), including recA and lexA. In the presence of single-stranded DNA, RecA interacts with LexA causing an autocatalytic cleavage which disrupts the DNA-binding part of LexA, leading to derepression of the SOS regulon and eventually DNA repair. The protein is LexA repressor of Brucella anthropi (strain ATCC 49188 / DSM 6882 / CCUG 24695 / JCM 21032 / LMG 3331 / NBRC 15819 / NCTC 12168 / Alc 37) (Ochrobactrum anthropi).